The following is a 370-amino-acid chain: 4-hydroxy-3-methylbut-2-en-1-yl diphosphate synthase (flavodoxin) (370 aa).

Residues cysteine 268, cysteine 271, cysteine 303, and glutamate 310 each contribute to the [4Fe-4S] cluster site.

It belongs to the IspG family. Requires [4Fe-4S] cluster as cofactor.

It catalyses the reaction (2E)-4-hydroxy-3-methylbut-2-enyl diphosphate + oxidized [flavodoxin] + H2O + 2 H(+) = 2-C-methyl-D-erythritol 2,4-cyclic diphosphate + reduced [flavodoxin]. Its pathway is isoprenoid biosynthesis; isopentenyl diphosphate biosynthesis via DXP pathway; isopentenyl diphosphate from 1-deoxy-D-xylulose 5-phosphate: step 5/6. Converts 2C-methyl-D-erythritol 2,4-cyclodiphosphate (ME-2,4cPP) into 1-hydroxy-2-methyl-2-(E)-butenyl 4-diphosphate. This chain is 4-hydroxy-3-methylbut-2-en-1-yl diphosphate synthase (flavodoxin), found in Bacillus cereus (strain AH187).